A 330-amino-acid chain; its full sequence is MQNLGIAITGSGSAVPETSLHNEELSQLVETSDEWISTRTGIRQRRLALPTESLSSLAAAASRQAIASAGITASDIDLILLATSTPDDLFGTATKIQAELGANKAVAFDLTAACSGFVFGLVTAAQFIRTGVYQNVLLIGADILSRWVDWQDRRTCVLFGDGAGAVVLQANSSDRLLGFALKSDGTQNHYLNLAYQGTAKEILPNVKITQGTYQPVTMNGKEVYRFAAQKVPEIIDKALFEAQLTVDQIDWLLLHQANQRILDTVAQRLNIPAHKVISNLANYGNTSAASIPLALDEAVREGKIKPNDIIATSGFGAGLTWGAAIFQWGR.

Residues Cys-114 and His-255 contribute to the active site. The interval Gln-256–Arg-260 is ACP-binding. Residue Asn-285 is part of the active site.

It belongs to the thiolase-like superfamily. FabH family. Homodimer.

The protein resides in the cytoplasm. It catalyses the reaction malonyl-[ACP] + acetyl-CoA + H(+) = 3-oxobutanoyl-[ACP] + CO2 + CoA. The protein operates within lipid metabolism; fatty acid biosynthesis. Functionally, catalyzes the condensation reaction of fatty acid synthesis by the addition to an acyl acceptor of two carbons from malonyl-ACP. Catalyzes the first condensation reaction which initiates fatty acid synthesis and may therefore play a role in governing the total rate of fatty acid production. Possesses both acetoacetyl-ACP synthase and acetyl transacylase activities. Its substrate specificity determines the biosynthesis of branched-chain and/or straight-chain of fatty acids. This is Beta-ketoacyl-[acyl-carrier-protein] synthase III from Nostoc sp. (strain PCC 7120 / SAG 25.82 / UTEX 2576).